Reading from the N-terminus, the 300-residue chain is Protein XRI1 (300 aa).

In terms of assembly, interacts (via C-terminal domain) with MIP1.

It is found in the nucleus. In terms of biological role, required for mitotic division of the generative cell nucleus and the development of mature tricellular pollen grains, and for male and female meiosis. This Arabidopsis thaliana (Mouse-ear cress) protein is Protein XRI1 (XRI1).